A 185-amino-acid polypeptide reads, in one-letter code: Large ribosomal subunit protein uL5 (185 aa).

It belongs to the universal ribosomal protein uL5 family. As to quaternary structure, part of the 50S ribosomal subunit; part of the 5S rRNA/L5/L18/L25 subcomplex. Contacts the 5S rRNA and the P site tRNA. Forms a bridge to the 30S subunit in the 70S ribosome.

Its function is as follows. This is one of the proteins that bind and probably mediate the attachment of the 5S RNA into the large ribosomal subunit, where it forms part of the central protuberance. In the 70S ribosome it contacts protein S13 of the 30S subunit (bridge B1b), connecting the 2 subunits; this bridge is implicated in subunit movement. Contacts the P site tRNA; the 5S rRNA and some of its associated proteins might help stabilize positioning of ribosome-bound tRNAs. The protein is Large ribosomal subunit protein uL5 of Bartonella bacilliformis (strain ATCC 35685 / KC583 / Herrer 020/F12,63).